We begin with the raw amino-acid sequence, 764 residues long: Chloride anion exchanger (764 aa).

The Cytoplasmic segment spans residues 1 to 76; that stretch reads MIEPFGNQYI…YRLKEWLLSD (76 aa). The helical transmembrane segment at 77–97 threads the bilayer; that stretch reads IVSGISTGIVAVLQGLAFALL. At 98–99 the chain is on the extracellular side; sequence VD. A helical membrane pass occupies residues 100–120; sequence IPPVYGLYASFFPAIIYLFFG. Residues 121-124 lie on the Cytoplasmic side of the membrane; that stretch reads TSRH. The helical transmembrane segment at 125–145 threads the bilayer; the sequence is ISVGPFPILSMMVGLAVSGAV. The Extracellular portion of the chain corresponds to 146 to 175; that stretch reads SKAVPDRNATTLGLPNNSNNSSLLDDERVR. N-linked (GlcNAc...) asparagine glycosylation is found at asparagine 153, asparagine 161, and asparagine 165. Residues 176 to 196 form a helical membrane-spanning segment; sequence VAAAASVTVLSGIIQLAFGIL. A topological domain (cytoplasmic) is located at residue arginine 197. A helical transmembrane segment spans residues 198–218; it reads IGFVVIYLSESLISGFTTAAA. The Extracellular portion of the chain corresponds to 219–257; sequence VHVLVSQLKFIFQLTVPSHTDPVSIFKVLYSVFSQIEKT. A helical transmembrane segment spans residues 258–278; that stretch reads NIADLVTALIVLLVVSIVKEI. Residues 279 to 342 lie on the Cytoplasmic side of the membrane; the sequence is NQRFKDKLPV…VETFQNTVGD (64 aa). The chain crosses the membrane as a helical span at residues 343 to 363; sequence CFGIAMVAFAVAFSVASVYSL. At 364–374 the chain is on the extracellular side; the sequence is KYDYPLDGNQE. A helical transmembrane segment spans residues 375-395; the sequence is LIALGLGNIVCGVFRGFAGST. The Cytoplasmic segment spans residues 396-411; it reads ALSRSAVQESTGGKTQ. The helical transmembrane segment at 412–432 threads the bilayer; sequence IAGLIGAIIVLIVVLAIGFLL. The Extracellular portion of the chain corresponds to 433–469; sequence APLQKSVLAALALGNLKGMLMQFAEIGRLWRKDKYDC. Residues 470–490 form a helical membrane-spanning segment; sequence LIWIMTFIFTIVLGLGLGLAA. Topologically, residues 491-701 are cytoplasmic; sequence SVAFQLLTIV…EKLNRYEFFD (211 aa). An STAS domain is found at 525-720; sequence DYYDMYEPEG…LTIHDAVLHI (196 aa). Positions 761-764 match the PDZ-binding motif; sequence ETKF.

The protein belongs to the SLC26A/SulP transporter (TC 2.A.53) family. As to quaternary structure, interacts with CFTR, SLC26A6 and NHERF1. Interacts with PDZK1. Interacts (via PDZ-binding motif) with NHERF4 (via the third PDZ domain); interaction leads to decreased expression of SLC26A3 on the cell membrane resulting in its reduced exchanger activity. In terms of processing, N-glycosylation is required for efficient cell surface expression, and protection from proteolytic degradation. Expressed in the colon. Expression is significantly decreased in adenomas (polyps) and adenocarcinomas of the colon.

The protein resides in the apical cell membrane. It is found in the membrane. It localises to the cell membrane. It carries out the reaction hydrogencarbonate(in) + 2 chloride(out) = hydrogencarbonate(out) + 2 chloride(in). With respect to regulation, inhibited by acidic pH. Its function is as follows. Mediates chloride-bicarbonate exchange with a chloride bicarbonate stoichiometry of 2:1 in the intestinal epithelia. Plays a role in the chloride and bicarbonate homeostasis during sperm epididymal maturation and capacitation. In Homo sapiens (Human), this protein is Chloride anion exchanger (SLC26A3).